We begin with the raw amino-acid sequence, 974 residues long: UvrABC system protein A (974 aa).

Residue 34–41 (GLSGSGKS) participates in ATP binding. ABC transporter domains are found at residues 331 to 610 (WARS…TNSL) and 630 to 959 (ISKT…QFLK). 663–670 (GVSGGGKS) is an ATP binding site. The C4-type zinc finger occupies 762–788 (CEACQGDGVIKIEMHFLPDVYVTCDVC).

It belongs to the ABC transporter superfamily. UvrA family. In terms of assembly, forms a heterotetramer with UvrB during the search for lesions.

It is found in the cytoplasm. Its function is as follows. The UvrABC repair system catalyzes the recognition and processing of DNA lesions. UvrA is an ATPase and a DNA-binding protein. A damage recognition complex composed of 2 UvrA and 2 UvrB subunits scans DNA for abnormalities. When the presence of a lesion has been verified by UvrB, the UvrA molecules dissociate. The chain is UvrABC system protein A from Brucella abortus (strain 2308).